Here is a 503-residue protein sequence, read N- to C-terminus: Ribose import ATP-binding protein RbsA (503 aa).

ABC transporter domains lie at 10 to 246 (LEVR…VGRD) and 256 to 500 (VEPG…TGSE). 42–49 (GENGAGKS) contributes to the ATP binding site.

This sequence belongs to the ABC transporter superfamily. Ribose importer (TC 3.A.1.2.1) family. As to quaternary structure, the complex is composed of an ATP-binding protein (RbsA), two transmembrane proteins (RbsC) and a solute-binding protein (RbsB).

The protein resides in the cell membrane. The catalysed reaction is D-ribose(out) + ATP + H2O = D-ribose(in) + ADP + phosphate + H(+). In terms of biological role, part of the ABC transporter complex RbsABC involved in ribose import. Responsible for energy coupling to the transport system. This Rhodococcus jostii (strain RHA1) protein is Ribose import ATP-binding protein RbsA.